The sequence spans 317 residues: Ribosomal protein L11 methyltransferase (317 aa).

S-adenosyl-L-methionine is bound by residues Thr158, Gly179, Asp201, and Asn244.

Belongs to the methyltransferase superfamily. PrmA family.

It is found in the cytoplasm. It catalyses the reaction L-lysyl-[protein] + 3 S-adenosyl-L-methionine = N(6),N(6),N(6)-trimethyl-L-lysyl-[protein] + 3 S-adenosyl-L-homocysteine + 3 H(+). In terms of biological role, methylates ribosomal protein L11. This is Ribosomal protein L11 methyltransferase from Lactococcus lactis subsp. lactis (strain IL1403) (Streptococcus lactis).